We begin with the raw amino-acid sequence, 116 residues long: MRVKGGTVTRARRKKWLKLAKGYFGHKSIGYKVAKQAVVKSWTYAFRDRKQIKREFRKLWIARINAATRAEGLSYSKFINGLKRANVTINRKMLSELAISEPKTFAMLIKIARDAK.

It belongs to the bacterial ribosomal protein bL20 family.

In terms of biological role, binds directly to 23S ribosomal RNA and is necessary for the in vitro assembly process of the 50S ribosomal subunit. It is not involved in the protein synthesizing functions of that subunit. This is Large ribosomal subunit protein bL20 (rplT) from Mycoplasmopsis fermentans (Mycoplasma fermentans).